We begin with the raw amino-acid sequence, 950 residues long: 2-oxoglutarate dehydrogenase E1 component (950 aa).

This sequence belongs to the alpha-ketoglutarate dehydrogenase family. In terms of assembly, homodimer. Part of the 2-oxoglutarate dehydrogenase (OGDH) complex composed of E1 (2-oxoglutarate dehydrogenase), E2 (dihydrolipoamide succinyltransferase) and E3 (dihydrolipoamide dehydrogenase); the complex contains multiple copies of the three enzymatic components (E1, E2 and E3). Requires thiamine diphosphate as cofactor.

The enzyme catalyses N(6)-[(R)-lipoyl]-L-lysyl-[protein] + 2-oxoglutarate + H(+) = N(6)-[(R)-S(8)-succinyldihydrolipoyl]-L-lysyl-[protein] + CO2. Its function is as follows. E1 component of the 2-oxoglutarate dehydrogenase (OGDH) complex which catalyzes the decarboxylation of 2-oxoglutarate, the first step in the conversion of 2-oxoglutarate to succinyl-CoA and CO(2). The sequence is that of 2-oxoglutarate dehydrogenase E1 component (odhA) from Cupriavidus necator (strain ATCC 17699 / DSM 428 / KCTC 22496 / NCIMB 10442 / H16 / Stanier 337) (Ralstonia eutropha).